The primary structure comprises 266 residues: Zinc transporter ZupT (266 aa).

A run of 8 helical transmembrane segments spans residues 8–28 (LALTLLAGISTGIGSLLALMV), 35–55 (FLTFALGFSAGIMLYVSFVEI), 70–90 (HAAGWITTAAFFGGMLFIWLI), 123–143 (GIFTAAAIAIHNFPEGLAVFF), 152–172 (GVVIAATIALHNIPEGMAVAV), 185–205 (FSYSFLSGLAEPLGAIIGYAL), 209–229 (FLSPLVFACVLGGVAGIMVYI), and 246–266 (IAISGLILGMGVMAVSLLMLA). Residues N134 and E137 each coordinate Fe(2+). Residues E137 and H162 each coordinate Zn(2+). Residues N163, E166, and E195 each contribute to the Fe(2+) site. Zn(2+) is bound at residue E166.

It belongs to the ZIP transporter (TC 2.A.5) family. ZupT subfamily.

It is found in the cell inner membrane. The catalysed reaction is Zn(2+)(in) = Zn(2+)(out). In terms of biological role, mediates zinc uptake. May also transport other divalent cations. This chain is Zinc transporter ZupT, found in Chlorobium limicola (strain DSM 245 / NBRC 103803 / 6330).